Reading from the N-terminus, the 293-residue chain is AKT-interacting protein homolog A (293 aa).

Positions 1 to 11 (MNPFWNMSSAS) are enriched in polar residues. The interval 1-45 (MNPFWNMSSASVRKRSENDEKISTGDQKISPPRSSSAKKQLPPIP) is disordered. The span at 14–23 (KRSENDEKIS) shows a compositional bias: basic and acidic residues. A compositionally biased stretch (polar residues) spans 24–38 (TGDQKISPPRSSSAK). The 149-residue stretch at 75–223 (YLEYSLLAEF…VVDSVKLCNS (149 aa)) folds into the UBC core domain. The segment covering 256-266 (AQKKKSEEQSK) has biased composition (basic and acidic residues). The segment at 256–293 (AQKKKSEEQSKGLHVSGLSWVKPGSVLPFSKEENSLQT) is disordered.

This sequence belongs to the ubiquitin-conjugating enzyme family. FTS subfamily.

Its subcellular location is the cytoplasm. It is found in the cell membrane. Functionally, may function to promote vesicle trafficking and/or fusion. May also regulate apoptosis. In Xenopus laevis (African clawed frog), this protein is AKT-interacting protein homolog A (aktip-a).